Reading from the N-terminus, the 35-residue chain is uncharacterized protein (35 aa).

The helical transmembrane segment at 14-34 (LAHLIGIIYLIIILGTLVMLF) threads the bilayer.

The protein resides in the endoplasmic reticulum membrane. This is an uncharacterized protein from Saccharomyces cerevisiae (strain ATCC 204508 / S288c) (Baker's yeast).